Reading from the N-terminus, the 146-residue chain is Hemoglobin subunit beta-2 (146 aa).

In terms of domain architecture, Globin spans 2-146 (GLTAHEKQLI…IADALGKGYH (145 aa)). Heme b is bound by residues His63 and His92.

The protein belongs to the globin family. As to quaternary structure, heterotetramer of two alpha chains and two beta chains. Red blood cells.

Functionally, involved in oxygen transport from the lung to the various peripheral tissues. The chain is Hemoglobin subunit beta-2 (hbb2) from Xenopus borealis (Kenyan clawed frog).